A 442-amino-acid polypeptide reads, in one-letter code: Protein trichome birefringence-like 26 (442 aa).

A helical; Signal-anchor for type II membrane protein membrane pass occupies residues 51 to 71 (FFLYFSLVALAYYFIISSLAV). The GDS motif motif lies at 164-166 (GDS). The DCXHWCLPGXXDXWN motif motif lies at 409–423 (DCLHWCLPGPIDSWN).

Belongs to the PC-esterase family. TBL subfamily.

It is found in the membrane. Functionally, may be involved in the O-acetylation of mannan. May act as a bridging protein that binds pectin and other cell wall polysaccharides. Probably involved in maintaining esterification of pectins. This chain is Protein trichome birefringence-like 26 (TBL26), found in Arabidopsis thaliana (Mouse-ear cress).